Here is a 99-residue protein sequence, read N- to C-terminus: Small ribosomal subunit protein bS20 (99 aa).

The span at 1–20 shows a compositional bias: basic residues; it reads MASAKPKKKNPRLASGRKRV. The disordered stretch occupies residues 1 to 21; the sequence is MASAKPKKKNPRLASGRKRVR.

The protein belongs to the bacterial ribosomal protein bS20 family.

In terms of biological role, binds directly to 16S ribosomal RNA. This is Small ribosomal subunit protein bS20 from Verminephrobacter eiseniae (strain EF01-2).